The following is an 839-amino-acid chain: Protein translocase subunit SecA (839 aa).

ATP is bound by residues Gln-85, 103–107 (GEGKT), and Asp-493. Residues 780 to 790 (QIHEQERERAS) are compositionally biased toward basic and acidic residues. The disordered stretch occupies residues 780–839 (QIHEQERERASQRATTAAPQNIQSQQSANTDDLPKVERNEACPCGSGKKFKNCHGRKSFS). Over residues 791–809 (QRATTAAPQNIQSQQSANT) the composition is skewed to polar residues. Residues Cys-821, Cys-823, Cys-832, and His-833 each contribute to the Zn(2+) site. The segment covering 827-839 (KKFKNCHGRKSFS) has biased composition (basic residues).

The protein belongs to the SecA family. In terms of assembly, monomer and homodimer. Part of the essential Sec protein translocation apparatus which comprises SecA, SecYEG and auxiliary proteins SecDF. Other proteins may also be involved. Requires Zn(2+) as cofactor.

It is found in the cell membrane. It localises to the cytoplasm. It catalyses the reaction ATP + H2O + cellular proteinSide 1 = ADP + phosphate + cellular proteinSide 2.. In terms of biological role, part of the Sec protein translocase complex. Interacts with the SecYEG preprotein conducting channel. Has a central role in coupling the hydrolysis of ATP to the transfer of proteins into and across the cell membrane, serving as an ATP-driven molecular motor driving the stepwise translocation of polypeptide chains across the membrane. The sequence is that of Protein translocase subunit SecA from Streptococcus pyogenes serotype M28 (strain MGAS6180).